Here is a 398-residue protein sequence, read N- to C-terminus: Cholinephosphotransferase 1 (398 aa).

Alanine 2 carries the post-translational modification N-acetylalanine. Topologically, residues 2-62 are cytoplasmic; the sequence is AAGAGARPAP…LLQWIPLWMA (61 aa). The chain crosses the membrane as a helical span at residues 63-83; sequence PNTITLIGLAINLVTTLVLIF. Asparagine 64 lines the CDP-choline pocket. The Lumenal portion of the chain corresponds to 84 to 93; sequence YCPTVTEEAP. A helical membrane pass occupies residues 94–118; it reads YWTYLLCALGLFIYQSLDAIDGKQA. Mg(2+) is bound by residues aspartate 111 and aspartate 114. Residue arginine 119 coordinates CDP-choline. Residues 119 to 125 are Cytoplasmic-facing; it reads RRTNSCS. A helical membrane pass occupies residues 126-150; the sequence is PLGELFDHGCDSLSTVFMAIGASIA. A Mg(2+)-binding site is contributed by aspartate 132. Residue histidine 133 is the Proton acceptor of the active site. Aspartate 136 is a Mg(2+) binding site. Residues 151–160 lie on the Lumenal side of the membrane; the sequence is VRLGTHPDWL. A helical membrane pass occupies residues 161–179; that stretch reads FFCSFVGMFMFYCAHWQTY. Topologically, residues 180-190 are cytoplasmic; sequence VSGVLRFGRVD. Residues 191–207 form a helical membrane-spanning segment; sequence VTEIQVALVIVFMLSTF. Residues 208 to 222 lie on the Lumenal side of the membrane; that stretch reads GGATMWDYTIPILEI. A helical membrane pass occupies residues 223-248; sequence KLKIVPVLGVVGGLIFSCSNYFHVIL. Residues 249 to 265 are Cytoplasmic-facing; sequence HGGVGKNGSTIAGTSVL. A helical membrane pass occupies residues 266 to 281; that stretch reads SPGLHIGLIIILAIMI. Residues 282-293 lie on the Lumenal side of the membrane; it reads YKKSATNMFEKH. Residues 294 to 316 form a helical membrane-spanning segment; that stretch reads PCLYTLMFGCVFAKVAQKLVIAH. Residues 317 to 329 are Cytoplasmic-facing; that stretch reads MTKSELYLQDTVF. The chain crosses the membrane as a helical span at residues 330–339; the sequence is IGPGLLFLDQ. The Lumenal segment spans residues 340-346; that stretch reads YFNNFID. Residues 347–376 traverse the membrane as a helical segment; the sequence is EYVVLWIAMVISSFDMMIYFTSLCLQISRH. The Cytoplasmic segment spans residues 377–398; the sequence is LHLNIFKTSCQQAPEQVYKHID.

This sequence belongs to the CDP-alcohol phosphatidyltransferase class-I family. Mg(2+) serves as cofactor. Requires Mn(2+) as cofactor. In terms of tissue distribution, expressed in brain, heart, lung, liver, spleen, intestine and muscle. Down-regulated in kidney of type 2 diabetic KK/Ta mice.

The protein resides in the golgi apparatus membrane. It carries out the reaction CDP-choline + a 1,2-diacyl-sn-glycerol = a 1,2-diacyl-sn-glycero-3-phosphocholine + CMP + H(+). It catalyses the reaction 1-octadecanoyl-2-(5Z,8Z,11Z,14Z-eicosatetraenoyl)-sn-glycerol + CDP-choline = 1-octadecanoyl-2-(5Z,8Z,11Z,14Z-eicosatetraenoyl)-sn-glycero-3-phosphocholine + CMP + H(+). The enzyme catalyses 1-hexadecanoyl-2-(9Z-octadecenoyl)-sn-glycerol + CDP-choline = 1-hexadecanoyl-2-(9Z-octadecenoyl)-sn-glycero-3-phosphocholine + CMP + H(+). The catalysed reaction is 1-hexadecanoyl-2-(4Z,7Z,10Z,13Z,16Z,19Z-docosahexaenoyl)-sn-glycerol + CDP-choline = 1-hexadecanoyl-2-(4Z,7Z,10Z,13Z,16Z,19Z-docosahexaenoyl)-sn-glycero-3-phosphocholine + CMP + H(+). It carries out the reaction 1,2-dioctanoyl-sn-glycerol + CDP-choline = 1,2-dioctanoyl-sn-glycero-3-phosphocholine + CMP + H(+). It functions in the pathway phospholipid metabolism; phosphatidylcholine biosynthesis; phosphatidylcholine from phosphocholine: step 2/2. Catalyzes the final step of de novo phosphatidylcholine (PC) synthesis, i.e. the transfer of choline phosphate from CDP-choline to the free hydroxyl of a diacylglycerol (DAG), producing a PC. It thereby plays a central role in the formation and maintenance of vesicular membranes. In Mus musculus (Mouse), this protein is Cholinephosphotransferase 1.